The chain runs to 154 residues: Endoribonuclease YbeY (154 aa).

Positions 113, 117, and 123 each coordinate Zn(2+).

The protein belongs to the endoribonuclease YbeY family. Zn(2+) is required as a cofactor.

It localises to the cytoplasm. Single strand-specific metallo-endoribonuclease involved in late-stage 70S ribosome quality control and in maturation of the 3' terminus of the 16S rRNA. In Vibrio vulnificus (strain YJ016), this protein is Endoribonuclease YbeY.